A 300-amino-acid polypeptide reads, in one-letter code: Probable protein phosphatase 2C 3 (300 aa).

The PPM-type phosphatase domain maps to 23 to 298 (IFAASEMQGW…DNMTTILVYL (276 aa)). The Mn(2+) site is built by Asp-57, Gly-58, Asp-237, and Asp-289.

The protein belongs to the PP2C family. Mg(2+) is required as a cofactor. Mn(2+) serves as cofactor.

It is found in the membrane. The catalysed reaction is O-phospho-L-seryl-[protein] + H2O = L-seryl-[protein] + phosphate. It carries out the reaction O-phospho-L-threonyl-[protein] + H2O = L-threonyl-[protein] + phosphate. Functionally, enzyme with a broad specificity. The polypeptide is Probable protein phosphatase 2C 3 (Paramecium tetraurelia).